We begin with the raw amino-acid sequence, 183 residues long: Translocon-associated protein subunit beta (183 aa).

A signal peptide spans 1–17 (MRLLASVLLALFAVSHA). Residues 18-149 (EEGARLLASK…DRRFSPHFLD (132 aa)) lie on the Lumenal side of the membrane. 2 N-linked (GlcNAc...) asparagine glycosylation sites follow: asparagine 88 and asparagine 104. A helical membrane pass occupies residues 150-169 (WAAFGVMTLPSIGIPLLLWY). At 170–183 (SSKRKYDTPKSKKN) the chain is on the cytoplasmic side.

This sequence belongs to the TRAP-beta family. Heterotetramer of TRAP-alpha, TRAP-beta, TRAP-delta and TRAP-gamma. Interacts with STING1.

The protein resides in the endoplasmic reticulum membrane. Functionally, TRAP proteins are part of a complex whose function is to bind calcium to the ER membrane and thereby regulate the retention of ER resident proteins. The protein is Translocon-associated protein subunit beta (SSR2) of Canis lupus familiaris (Dog).